The chain runs to 300 residues: NAD kinase (300 aa).

Asp-75 acts as the Proton acceptor in catalysis. Residues 75-76 (DG), 149-150 (ND), Arg-177, Asp-179, 190-195 (TAYALS), Ala-214, and Gln-248 contribute to the NAD(+) site.

Belongs to the NAD kinase family. A divalent metal cation serves as cofactor.

It localises to the cytoplasm. The catalysed reaction is NAD(+) + ATP = ADP + NADP(+) + H(+). In terms of biological role, involved in the regulation of the intracellular balance of NAD and NADP, and is a key enzyme in the biosynthesis of NADP. Catalyzes specifically the phosphorylation on 2'-hydroxyl of the adenosine moiety of NAD to yield NADP. This chain is NAD kinase, found in Burkholderia mallei (strain SAVP1).